The sequence spans 408 residues: GTPase Obg (408 aa).

The 159-residue stretch at 1–159 (MKFVDEVSIR…RDLKMEMKVL (159 aa)) folds into the Obg domain. The segment at 127–148 (NTRFKSSTNRAPRQTTPGKPGE) is disordered. The segment covering 129 to 143 (RFKSSTNRAPRQTTP) has biased composition (polar residues). The region spanning 160-333 (ADVGLLGLPN…LSHDLMRYLE (174 aa)) is the OBG-type G domain. Residues 166-173 (GLPNAGKS), 191-195 (FTTLV), 213-216 (DIPG), 283-286 (NKAD), and 314-316 (SAI) contribute to the GTP site. Residues serine 173 and threonine 193 each contribute to the Mg(2+) site. Over residues 385-401 (GDDDGWDDDFEDDEDGP) the composition is skewed to acidic residues. Residues 385–408 (GDDDGWDDDFEDDEDGPEIIYVRD) are disordered.

The protein belongs to the TRAFAC class OBG-HflX-like GTPase superfamily. OBG GTPase family. In terms of assembly, monomer. Requires Mg(2+) as cofactor.

Its subcellular location is the cytoplasm. Functionally, an essential GTPase which binds GTP, GDP and possibly (p)ppGpp with moderate affinity, with high nucleotide exchange rates and a fairly low GTP hydrolysis rate. Plays a role in control of the cell cycle, stress response, ribosome biogenesis and in those bacteria that undergo differentiation, in morphogenesis control. In Pseudomonas putida (strain ATCC 700007 / DSM 6899 / JCM 31910 / BCRC 17059 / LMG 24140 / F1), this protein is GTPase Obg.